The chain runs to 217 residues: tRNA (guanine-N(7)-)-methyltransferase (217 aa).

Residues Glu-48, Glu-73, Asn-100, and Asp-123 each contribute to the S-adenosyl-L-methionine site. Residue Asp-123 is part of the active site. Residues Lys-127 and Asp-159 each contribute to the substrate site.

It belongs to the class I-like SAM-binding methyltransferase superfamily. TrmB family.

It catalyses the reaction guanosine(46) in tRNA + S-adenosyl-L-methionine = N(7)-methylguanosine(46) in tRNA + S-adenosyl-L-homocysteine. It participates in tRNA modification; N(7)-methylguanine-tRNA biosynthesis. Its function is as follows. Catalyzes the formation of N(7)-methylguanine at position 46 (m7G46) in tRNA. This chain is tRNA (guanine-N(7)-)-methyltransferase, found in Leptospira interrogans serogroup Icterohaemorrhagiae serovar copenhageni (strain Fiocruz L1-130).